An 815-amino-acid polypeptide reads, in one-letter code: (E)-gamma-bisabolene synthase (815 aa).

4 residues coordinate Mg(2+): D561, D565, D709, and E717. Residues D561–D565 carry the DDXXD motif motif.

Belongs to the terpene synthase family. Tpsd subfamily. Requires Mg(2+) as cofactor. Mn(2+) is required as a cofactor.

The protein resides in the cytoplasm. The enzyme catalyses (2E,6E)-farnesyl diphosphate = (E)-gamma-bisabolene + diphosphate. Its pathway is terpene metabolism; oleoresin biosynthesis. In terms of biological role, involved in defensive oleoresin formation in conifers in response to insect attack or other injury. Involved in sesquiterpene (C15) olefins biosynthesis. Produces mainly (E)-gamma-bisabolene when used with farnesyl diphosphate as substrate. No activity with geranyl diphosphate or geranylgeranyl diphosphate. This Pseudotsuga menziesii (Douglas-fir) protein is (E)-gamma-bisabolene synthase (TPS3).